The sequence spans 285 residues: Bifunctional protein FolD 2 (285 aa).

Residues 164-166 (GRS), Ser-189, and Val-230 each bind NADP(+).

It belongs to the tetrahydrofolate dehydrogenase/cyclohydrolase family. Homodimer.

The enzyme catalyses (6R)-5,10-methylene-5,6,7,8-tetrahydrofolate + NADP(+) = (6R)-5,10-methenyltetrahydrofolate + NADPH. The catalysed reaction is (6R)-5,10-methenyltetrahydrofolate + H2O = (6R)-10-formyltetrahydrofolate + H(+). It participates in one-carbon metabolism; tetrahydrofolate interconversion. Functionally, catalyzes the oxidation of 5,10-methylenetetrahydrofolate to 5,10-methenyltetrahydrofolate and then the hydrolysis of 5,10-methenyltetrahydrofolate to 10-formyltetrahydrofolate. The polypeptide is Bifunctional protein FolD 2 (Geobacter sulfurreducens (strain ATCC 51573 / DSM 12127 / PCA)).